The chain runs to 452 residues: NADH-quinone oxidoreductase subunit N 2 (452 aa).

Helical transmembrane passes span 6–26 (VLIP…YGFI), 33–53 (TYIL…FNFG), 70–90 (TLRI…YSDL), 97–117 (SVEY…MIVA), 120–140 (LLIL…LAGF), 154–174 (YFIL…FFYA), 194–214 (ILLG…LAPF), 232–252 (FLST…FLSI), 258–278 (IQDL…VLAL), 286–306 (MLAY…LLPE), 311–331 (ISLI…FAFI), 355–375 (FCII…GFIV), 387–407 (GYGS…FYYL), and 432–452 (ALSG…LLIF).

The protein belongs to the complex I subunit 2 family. NDH-1 is composed of 14 different subunits. Subunits NuoA, H, J, K, L, M, N constitute the membrane sector of the complex.

Its subcellular location is the cell inner membrane. The catalysed reaction is a quinone + NADH + 5 H(+)(in) = a quinol + NAD(+) + 4 H(+)(out). In terms of biological role, NDH-1 shuttles electrons from NADH, via FMN and iron-sulfur (Fe-S) centers, to quinones in the respiratory chain. The immediate electron acceptor for the enzyme in this species is believed to be ubiquinone. Couples the redox reaction to proton translocation (for every two electrons transferred, four hydrogen ions are translocated across the cytoplasmic membrane), and thus conserves the redox energy in a proton gradient. The protein is NADH-quinone oxidoreductase subunit N 2 of Thermodesulfovibrio yellowstonii (strain ATCC 51303 / DSM 11347 / YP87).